Consider the following 64-residue polypeptide: Alpha-conotoxin-like Lt1.3 (64 aa).

An N-terminal signal peptide occupies residues 1–21; the sequence is MGMRMMFTMFLLVVLTTTVVS. A propeptide spanning residues 22 to 45 is cleaved from the precursor; the sequence is FNLDRESNHENRRTSNQITRGMWD. 2 cysteine pairs are disulfide-bonded: Cys47–Cys53 and Cys48–Cys61. The segment at 49–51 is lacks the Ser-Xaa-Pro motif that is crucial for potent interaction with nAChR; it reads DDP.

It belongs to the conotoxin A superfamily. In terms of tissue distribution, expressed by the venom duct.

Its subcellular location is the secreted. In terms of biological role, alpha-conotoxins act on postsynaptic membranes, they bind to the nicotinic acetylcholine receptors (nAChR) and thus inhibit them. Has possibly a distinct nAChR binding mode from other alpha-conotoxins, due to a different three residue motif (lacks the Ser-Xaa-Pro motif). The polypeptide is Alpha-conotoxin-like Lt1.3 (Conus litteratus (Lettered cone)).